Here is a 771-residue protein sequence, read N- to C-terminus: Solute carrier family 7 member 14 (771 aa).

6 helical membrane passes run L58–V78, A83–V103, F130–G150, Y187–V207, V216–I236, and W251–I271. An N-linked (GlcNAc...) asparagine glycan is attached at N282. A run of 5 helical transmembrane segments spans residues A291–V311, F336–P356, V360–Y380, P384–L404, and L407–L427. 3 positions are modified to phosphoserine: S465, S468, and S488. Transmembrane regions (helical) follow at residues V565–F585, W596–L616, M628–L648, and W655–W675. Residue N676 is glycosylated (N-linked (GlcNAc...) asparagine). The disordered stretch occupies residues T712–E771. Positions Q732 to T743 are enriched in polar residues. The span at S745–K754 shows a compositional bias: basic residues. S757 and S769 each carry phosphoserine.

It belongs to the amino acid-polyamine-organocation (APC) superfamily. Cationic amino acid transporter (CAT) (TC 2.A.3.3) family.

The protein localises to the lysosome membrane. The catalysed reaction is 4-aminobutanoate(in) = 4-aminobutanoate(out). Imports 4-aminobutanoate (GABA) into lysosomes. May act as a GABA sensor that regulates mTORC2-dependent INS signaling and gluconeogenesis. The transport mechanism and substrate selectivity remain to be elucidated. In Bos taurus (Bovine), this protein is Solute carrier family 7 member 14.